A 1070-amino-acid polypeptide reads, in one-letter code: Duffy receptor (1070 aa).

The signal sequence occupies residues 1–20; that stretch reads MKGKNRSLFVLLVLLLLHKV. Topologically, residues 21–1007 are extracellular; it reads NNVLLERTIE…CFTKGGFKDK (987 aa). The interval 116–146 is disordered; the sequence is YMEGKDGGDKTGEEKDGEHKTDSKTDNGKGA. The span at 118-142 shows a compositional bias: basic and acidic residues; that stretch reads EGKDGGDKTGEEKDGEHKTDSKTDN. Asn183 carries N-linked (GlcNAc...) asparagine glycosylation. A pvRII region; mediates ACKR1 binding region spans residues 211–521; that stretch reads NTVMKNCNYK…AKKNTQEVVT (311 aa). 2 disulfides stabilise this stretch: Cys217–Cys246 and Cys230–Cys237. Asn255, Asn351, and Asn420 each carry an N-linked (GlcNAc...) asparagine glycan. 4 disulfides stabilise this stretch: Cys300-Cys377, Cys415-Cys432, Cys427-Cys507, and Cys436-Cys505. 3 stretches are compositionally biased toward polar residues: residues 525–542, 554–569, and 629–642; these read NAAKSQATNSNPISQPVD, THGNVNSGQDSSTTGK, and GASNSRPSESTVEA. The segment at 525-906 is disordered; that stretch reads NAAKSQATNS…HLNSNNNLSN (382 aa). The segment covering 697–711 has biased composition (basic and acidic residues); sequence ETGKGQDNDMAKATK. The segment covering 712 to 728 has biased composition (low complexity); that stretch reads DSSNSSDGTSSATGDTT. Asn715 is a glycosylation site (N-linked (GlcNAc...) asparagine). The span at 730-748 shows a compositional bias: basic and acidic residues; it reads AVDREINKGVPEDRDKTVG. The N-linked (GlcNAc...) asparagine glycan is linked to Asn787. A compositionally biased stretch (low complexity) spans 808 to 817; sequence LSKTESLEST. Asn825 carries an N-linked (GlcNAc...) asparagine glycan. 2 stretches are compositionally biased toward basic and acidic residues: residues 835–849 and 865–889; these read NGGKEKDLQKHDFKS and AEGHDRDSIKNDKAERRKHMNKDTF. Over residues 895–906 the composition is skewed to low complexity; the sequence is SHHLNSNNNLSN. Residues Asn903 and Asn938 are each glycosylated (N-linked (GlcNAc...) asparagine). A helical transmembrane segment spans residues 1008 to 1025; that stretch reads TYFAAAGALLILLLLIAS. The Cytoplasmic portion of the chain corresponds to 1026 to 1070; sequence RKMIKNDSEEATFNEFEEYCDNIHRIPLMPNNIEHMQPSTPLDYS.

In terms of assembly, homodimer; dimerization (via PvRII region) is promoted by the interaction with human ACKR1. Interacts (via PvRII region) with human ACKR1 (via N-terminal extracellular domain).

The protein localises to the membrane. Its function is as follows. Binds to the human erythrocyte Duffy blood group determinant (ACKR1). The sequence is that of Duffy receptor (PVDR) from Plasmodium vivax (strain Salvador I).